Consider the following 198-residue polypeptide: Holliday junction resolvase RecU (198 aa).

The disordered stretch occupies residues 1–29; the sequence is MIRYPNGKSYQPKTAASSLQKKPSYSNRG. The span at 8 to 29 shows a compositional bias: polar residues; the sequence is KSYQPKTAASSLQKKPSYSNRG. 4 residues coordinate Mg(2+): T83, D85, E98, and Q117.

It belongs to the RecU family. Requires Mg(2+) as cofactor.

The protein resides in the cytoplasm. The enzyme catalyses Endonucleolytic cleavage at a junction such as a reciprocal single-stranded crossover between two homologous DNA duplexes (Holliday junction).. In terms of biological role, endonuclease that resolves Holliday junction intermediates in genetic recombination. Cleaves mobile four-strand junctions by introducing symmetrical nicks in paired strands. Promotes annealing of linear ssDNA with homologous dsDNA. Required for DNA repair, homologous recombination and chromosome segregation. This chain is Holliday junction resolvase RecU, found in Bacillus licheniformis (strain ATCC 14580 / DSM 13 / JCM 2505 / CCUG 7422 / NBRC 12200 / NCIMB 9375 / NCTC 10341 / NRRL NRS-1264 / Gibson 46).